The following is a 284-amino-acid chain: Acetylglutamate kinase (284 aa).

Substrate is bound by residues 64-65 (GG), Arg-86, and Asn-179.

It belongs to the acetylglutamate kinase family. ArgB subfamily.

The protein resides in the cytoplasm. The enzyme catalyses N-acetyl-L-glutamate + ATP = N-acetyl-L-glutamyl 5-phosphate + ADP. Its pathway is amino-acid biosynthesis; L-arginine biosynthesis; N(2)-acetyl-L-ornithine from L-glutamate: step 2/4. Functionally, catalyzes the ATP-dependent phosphorylation of N-acetyl-L-glutamate. This chain is Acetylglutamate kinase, found in Prochlorococcus marinus subsp. pastoris (strain CCMP1986 / NIES-2087 / MED4).